Reading from the N-terminus, the 95-residue chain is uncharacterized protein (95 aa).

Residues 29–53 (LVSTATCMAALFLRFKLIAWVAFIL) form a helical membrane-spanning segment.

The protein localises to the membrane. This is an uncharacterized protein from Schizosaccharomyces pombe (strain 972 / ATCC 24843) (Fission yeast).